We begin with the raw amino-acid sequence, 153 residues long: Iron-sulfur cluster assembly scaffold protein IscU 1 (153 aa).

4 residues coordinate [2Fe-2S] cluster: cysteine 33, cysteine 58, histidine 101, and cysteine 102.

It belongs to the NifU family. In terms of assembly, forms a heterotetramer with IscS2.

In terms of biological role, a scaffold on which IscS assembles Fe-S clusters. Subsequently gives the nascent cluster to other proteins. It is likely that Fe-S cluster coordination is flexible as the role of this complex is to build and then hand off Fe-S clusters. In Archaeoglobus fulgidus (strain ATCC 49558 / DSM 4304 / JCM 9628 / NBRC 100126 / VC-16), this protein is Iron-sulfur cluster assembly scaffold protein IscU 1 (iscU1).